Consider the following 255-residue polypeptide: uncharacterized protein (255 aa).

This is an uncharacterized protein from Pseudomonas chlororaphis (Pseudomonas aureofaciens).